The primary structure comprises 180 residues: Ribulose bisphosphate carboxylase small subunit, chloroplastic 4 (180 aa).

A chloroplast-targeting transit peptide spans 1 to 56 (MASSIVSSAAVATRGNGAQASMVAPFTGLKSTASFPVSRKQNLDITSIASNGGRVS).

The protein belongs to the RuBisCO small chain family. As to quaternary structure, heterohexadecamer of 8 large and 8 small subunits. (Microbial infection) Binds to tobamovirus movement protein; this interaction seems required for viral systemic movement.

Its subcellular location is the plastid. The protein resides in the chloroplast. The protein localises to the cell junction. It localises to the plasmodesma. Functionally, ruBisCO catalyzes two reactions: the carboxylation of D-ribulose 1,5-bisphosphate, the primary event in carbon dioxide fixation, as well as the oxidative fragmentation of the pentose substrate. Both reactions occur simultaneously and in competition at the same active site. Although the small subunit is not catalytic it is essential for maximal activity. Involved in antiviral defenses. This is Ribulose bisphosphate carboxylase small subunit, chloroplastic 4 from Solanum lycopersicum (Tomato).